The chain runs to 211 residues: Arginine exporter protein ArgO (211 aa).

The next 6 helical transmembrane spans lie at 1–21, 37–57, 68–88, 111–131, 147–167, and 179–199; these read MISYYFQGLALGAAMILPLGP, LMIALLCALSDLVLISAGIFG, LLALVTWGGVAFLLWYGFGAL, IIATMLAVTWLNPHVYLDTFV, WFALGTISASFLWFFGLALLA, and AQRIINILVGVVMWLIAFQLA.

The protein belongs to the LysE/ArgO transporter (TC 2.A.75) family.

It localises to the cell inner membrane. It catalyses the reaction L-arginine(in) = L-arginine(out). Its function is as follows. Involved in the export of arginine. Important to control the intracellular level of arginine and the correct balance between arginine and lysine. This chain is Arginine exporter protein ArgO, found in Salmonella schwarzengrund (strain CVM19633).